Reading from the N-terminus, the 1073-residue chain is Duffy receptor alpha form (1073 aa).

The signal sequence occupies residues 1 to 21 (MEGKKKRPLFFLLVLLLSHKA). The Extracellular portion of the chain corresponds to 22–1007 (NNVLFERMNG…YECFTKGSST (986 aa)). N-linked (GlcNAc...) asparagine glycosylation is found at asparagine 134, asparagine 179, and asparagine 202. Intrachain disulfides connect cysteine 214-cysteine 243 and cysteine 227-cysteine 234. 2 N-linked (GlcNAc...) asparagine glycosylation sites follow: asparagine 252 and asparagine 348. Disulfide bonds link cysteine 297–cysteine 374, cysteine 412–cysteine 429, cysteine 424–cysteine 504, and cysteine 433–cysteine 502. The disordered stretch occupies residues 517 to 915 (VKNVGSGVES…LNNRKLNRDQ (399 aa)). Residues 528 to 543 (AASSNPITEAVKSSSG) are compositionally biased toward polar residues. Residues 546 to 561 (KVQEDSAHKSVNKGEG) show a composition bias toward basic and acidic residues. A compositionally biased stretch (polar residues) spans 562–576 (KSSTNEADPGSQSGA). Composition is skewed to basic and acidic residues over residues 675 to 710 (GEVHNGTDTEPKEDGEKADPQKDIEVKGKQDTDDRS) and 717 to 734 (HTDERATLGETHMEKDTE). N-linked (GlcNAc...) asparagine glycosylation occurs at asparagine 679. The span at 736-766 (AGGSTLTPEQNVSVASDNGNVPGSGNKQNEG) shows a compositional bias: polar residues. Asparagine 746, asparagine 779, and asparagine 788 each carry an N-linked (GlcNAc...) asparagine glycan. Residues 799–810 (GNEKDFQKHDFM) are compositionally biased toward basic and acidic residues. Low complexity-rich tracts occupy residues 821–843 (SDHTSSDQTSSDHTSSDQTSSDH) and 851–864 (SDQTSSDQTSSDQT). The segment covering 867-891 (TEGHHRDNVRNPEIKSSEDMSKGDF) has biased composition (basic and acidic residues). Residues 893 to 909 (RNSNSNELYSHNNLNNR) are compositionally biased toward polar residues. A helical membrane pass occupies residues 1008-1029 (GIVYFATGGAFLIILLLFASWN). Topologically, residues 1030–1073 (AASNDYEEEATFDEFVEYSDDIHRTPLMPNDIEHMQQFTPLDYS) are cytoplasmic.

As to quaternary structure, interacts (via region II) with human ACKR1 (via N-terminal extracellular domain). Interacts (via region II) with rhesus macaque ACKR1 (via N-terminal extracellular domain).

It localises to the cell membrane. The protein resides in the cytoplasmic vesicle. Its subcellular location is the secretory vesicle. It is found in the microneme. Its function is as follows. Binds to the human erythrocyte Duffy blood group determinant (ACKR1). Binds to the rhesus macaque erythrocyte Duffy blood group determinant (ACKR1). The sequence is that of Duffy receptor alpha form from Plasmodium knowlesi.